Here is a 130-residue protein sequence, read N- to C-terminus: Small ribosomal subunit protein uS9 (130 aa).

The interval 98 to 130 (LKRAGFLTRDARKKERKKYGQPGARKRFQYSKR) is disordered. Residues 111–130 (KERKKYGQPGARKRFQYSKR) show a composition bias toward basic residues.

It belongs to the universal ribosomal protein uS9 family.

The chain is Small ribosomal subunit protein uS9 from Sorangium cellulosum (strain So ce56) (Polyangium cellulosum (strain So ce56)).